Reading from the N-terminus, the 241-residue chain is Glutathione S-transferase omega-1 (241 aa).

Position 2 is an N-acetylserine (serine 2). One can recognise a GST N-terminal domain in the interval 22–101 (GSIRIYSMRF…YLDEAYPGKK (80 aa)). Residue cysteine 32 is the Nucleophile of the active site. An N6-acetyllysine modification is found at lysine 57. Residues lysine 59, valine 72, and 85 to 86 (ES) contribute to the glutathione site. One can recognise a GST C-terminal domain in the interval 106–230 (DPYEKACQKM…DWQGFLELYL (125 aa)). Serine 129 carries the post-translational modification Phosphoserine. Residues lysine 143, lysine 148, and lysine 152 each carry the N6-acetyllysine modification.

The protein belongs to the GST superfamily. Omega family. Homodimer. In terms of tissue distribution, ubiquitous. Highest expression in liver, pancreas, skeletal muscle, spleen, thymus, colon, blood leukocyte and heart. Lowest expression in brain, placenta and lung.

The protein resides in the cytoplasm. It localises to the cytosol. It carries out the reaction RX + glutathione = an S-substituted glutathione + a halide anion + H(+). It catalyses the reaction L-dehydroascorbate + 2 glutathione = glutathione disulfide + L-ascorbate. The enzyme catalyses methylarsonate + 2 glutathione + H(+) = methylarsonous acid + glutathione disulfide + H2O. Its activity is regulated as follows. Monomethylarsonic acid reductase activity is competitively inhibited by 1-chloro 2,4-dinitrobenzene (CDNB) and by deoxycholate. Functionally, exhibits glutathione-dependent thiol transferase and dehydroascorbate reductase activities. Has S-(phenacyl)glutathione reductase activity. Also has glutathione S-transferase activity. Participates in the biotransformation of inorganic arsenic and reduces monomethylarsonic acid (MMA) and dimethylarsonic acid. In Homo sapiens (Human), this protein is Glutathione S-transferase omega-1 (GSTO1).